We begin with the raw amino-acid sequence, 75 residues long: Small ribosomal subunit protein bS18 (75 aa).

It belongs to the bacterial ribosomal protein bS18 family. Part of the 30S ribosomal subunit. Forms a tight heterodimer with protein bS6.

Its function is as follows. Binds as a heterodimer with protein bS6 to the central domain of the 16S rRNA, where it helps stabilize the platform of the 30S subunit. In Roseobacter denitrificans (strain ATCC 33942 / OCh 114) (Erythrobacter sp. (strain OCh 114)), this protein is Small ribosomal subunit protein bS18.